We begin with the raw amino-acid sequence, 364 residues long: Methylthioribose-1-phosphate isomerase (364 aa).

Substrate is bound by residues 49–51 (RGA), arginine 89, and glutamine 201. The active-site Proton donor is aspartate 242. 252–253 (NK) is a substrate binding site.

This sequence belongs to the eIF-2B alpha/beta/delta subunits family. MtnA subfamily.

It catalyses the reaction 5-(methylsulfanyl)-alpha-D-ribose 1-phosphate = 5-(methylsulfanyl)-D-ribulose 1-phosphate. Its pathway is amino-acid biosynthesis; L-methionine biosynthesis via salvage pathway; L-methionine from S-methyl-5-thio-alpha-D-ribose 1-phosphate: step 1/6. Functionally, catalyzes the interconversion of methylthioribose-1-phosphate (MTR-1-P) into methylthioribulose-1-phosphate (MTRu-1-P). In Leptospira interrogans serogroup Icterohaemorrhagiae serovar copenhageni (strain Fiocruz L1-130), this protein is Methylthioribose-1-phosphate isomerase.